The chain runs to 162 residues: uncharacterized protein (162 aa).

Residues 6 to 78 (LDDLDRNILR…ALIVLEVGKP (73 aa)) enclose the HTH asnC-type domain. The segment at residues 25–44 (ISELSEQLKKPESTIHFRIK) is a DNA-binding region (H-T-H motif).

This is an uncharacterized protein from Pyrococcus furiosus (strain ATCC 43587 / DSM 3638 / JCM 8422 / Vc1).